A 278-amino-acid chain; its full sequence is Diaminopimelate epimerase (278 aa).

Residues Asn13, Gln46, and Asn67 each contribute to the substrate site. Cys76 (proton donor) is an active-site residue. Substrate is bound by residues 77–78, Asn160, Asn193, and 211–212; these read GN and ER. The Proton acceptor role is filled by Cys220. Residue 221-222 coordinates substrate; that stretch reads GT.

This sequence belongs to the diaminopimelate epimerase family. In terms of assembly, homodimer.

It localises to the cytoplasm. The catalysed reaction is (2S,6S)-2,6-diaminopimelate = meso-2,6-diaminopimelate. It functions in the pathway amino-acid biosynthesis; L-lysine biosynthesis via DAP pathway; DL-2,6-diaminopimelate from LL-2,6-diaminopimelate: step 1/1. In terms of biological role, catalyzes the stereoinversion of LL-2,6-diaminopimelate (L,L-DAP) to meso-diaminopimelate (meso-DAP), a precursor of L-lysine and an essential component of the bacterial peptidoglycan. The sequence is that of Diaminopimelate epimerase from Thioalkalivibrio sulfidiphilus (strain HL-EbGR7).